A 346-amino-acid polypeptide reads, in one-letter code: MKLSSEKLPKNPFSLSQYAAKQQKFFQWKKEKPDYYLHANLVDTALQFLKERIRRGDAMAYFLRGQLYFEEGWYEEALAQFEEIQEKDHQAIYQLGVMYYDGLGTIANAEKGVNYMRKILDSSCPQTMHLKFAAAYNLGRAYFEGKGVKRSDEEAERLWLLAADNGNPKASVKAQSILGLFYSMKEPKELEKAFFWHSEACGNGSLESQGALGLMYFYGQGIRQDTDAALHCLREAAERGNVYAQGTLVEYYYKMKFFTKCVSFSKRIADYDEVHDIPMIAHVTDCLPEFIIKGMAMAAFYHGRCLQLGLGIMKDEESAKHYYSKACRLNPTLADELHSLLIHQRI.

One copy of the TPR repeat lies at 58–91 (AMAYFLRGQLYFEEGWYEEALAQFEEIQEKDHQA). 6 Sel1-like repeats span residues 92–124 (IYQL…DSSC), 132–167 (FAAA…DNGN), 172–205 (VKAQ…GNGS), 206–241 (LESQ…ERGN), 242–276 (VYAQ…EVHD), and 296–331 (AMAA…RLNP).

Interacts with LRP2.

The protein localises to the cytoplasm. In terms of biological role, may act as an adapter that regulates LRP2 function. The protein is LRP2-binding protein (Lrp2bp) of Mus musculus (Mouse).